A 430-amino-acid polypeptide reads, in one-letter code: tRNA pseudouridine synthase Pus10 (430 aa).

Aspartate 253 serves as the catalytic Nucleophile. Substrate-binding residues include tyrosine 320 and tyrosine 392.

The protein belongs to the pseudouridine synthase Pus10 family.

The enzyme catalyses uridine(54) in tRNA = pseudouridine(54) in tRNA. It catalyses the reaction uridine(55) in tRNA = pseudouridine(55) in tRNA. Responsible for synthesis of pseudouridine from uracil-54 and uracil-55 in the psi GC loop of transfer RNAs. This is tRNA pseudouridine synthase Pus10 from Ignisphaera aggregans (strain DSM 17230 / JCM 13409 / AQ1.S1).